The chain runs to 408 residues: Histidine--tRNA ligase (408 aa).

This sequence belongs to the class-II aminoacyl-tRNA synthetase family. As to quaternary structure, homodimer.

Its subcellular location is the cytoplasm. It carries out the reaction tRNA(His) + L-histidine + ATP = L-histidyl-tRNA(His) + AMP + diphosphate + H(+). The sequence is that of Histidine--tRNA ligase from Campylobacter lari (strain RM2100 / D67 / ATCC BAA-1060).